Reading from the N-terminus, the 154-residue chain is Putative F-box protein At2g11200 (154 aa).

Residues Thr-5 to Tyr-51 enclose the F-box domain.

The sequence is that of Putative F-box protein At2g11200 from Arabidopsis thaliana (Mouse-ear cress).